The primary structure comprises 623 residues: Glutathione import ATP-binding protein GsiA (623 aa).

2 consecutive ABC transporter domains span residues 15–269 (VENL…RALL) and 314–564 (LRVR…RKLL). Residues 49–56 (GESGSGKS) and 357–364 (GESGSGKS) contribute to the ATP site.

Belongs to the ABC transporter superfamily. Glutathione importer (TC 3.A.1.5.11) family. The complex is composed of two ATP-binding proteins (GsiA), two transmembrane proteins (GsiC and GsiD) and a solute-binding protein (GsiB).

The protein resides in the cell inner membrane. It carries out the reaction glutathione(out) + ATP + H2O = glutathione(in) + ADP + phosphate + H(+). Functionally, part of the ABC transporter complex GsiABCD involved in glutathione import. Responsible for energy coupling to the transport system. The protein is Glutathione import ATP-binding protein GsiA of Shigella flexneri.